The chain runs to 161 residues: Allophycocyanin alpha chain (161 aa).

The residue at position 71 (N71) is an N4-methylasparagine. C81 contributes to the (2R,3E)-phycocyanobilin binding site.

This sequence belongs to the phycobiliprotein family. As to quaternary structure, heterodimer of an alpha and a beta chain. Post-translationally, contains one covalently linked phycocyanobilin chromophore.

It is found in the cellular thylakoid membrane. Functionally, light-harvesting photosynthetic bile pigment-protein from the phycobiliprotein complex. Allophycocyanin has a maximum absorption at approximately 650 nanometers. In Thermosynechococcus vestitus (strain NIES-2133 / IAM M-273 / BP-1), this protein is Allophycocyanin alpha chain (apcA).